The chain runs to 449 residues: Heterogeneous nuclear ribonucleoprotein H2 (449 aa).

An N-acetylmethionine modification is found at Met1. Met2 is modified (N-acetylmethionine; in Heterogeneous nuclear ribonucleoprotein H2, N-terminally processed). Residues Phe11–Ser90 enclose the RRM 1 domain. Ser23 carries the post-translational modification Phosphoserine. Lys35 participates in a covalent cross-link: Glycyl lysine isopeptide (Lys-Gly) (interchain with G-Cter in SUMO2). Residues Ser54 and Ser63 each carry the phosphoserine modification. Lys87 is covalently cross-linked (Glycyl lysine isopeptide (Lys-Gly) (interchain with G-Cter in SUMO2)). Ser90 is subject to Phosphoserine. Lys98 is covalently cross-linked (Glycyl lysine isopeptide (Lys-Gly) (interchain with G-Cter in SUMO2)). In terms of domain architecture, RRM 2 spans Gly111–Arg188. Arg233 is subject to Dimethylated arginine; alternate. Residue Arg233 is modified to Omega-N-methylarginine; alternate. A 1-1 repeat occupies Gly234 to Tyr249. The 2 X 16 AA Gly-rich approximate repeats stretch occupies residues Gly234–Tyr433. Tyr246 carries the phosphotyrosine modification. The region spanning His289 to Thr364 is the RRM 3 domain. Ser310 bears the Phosphoserine mark. Repeat copies occupy residues His354–Tyr372, His374–Tyr392, and Gly418–Tyr433. The interval His354 to Tyr392 is 2 X 19 AA perfect repeats.

In terms of assembly, component of a ribonucleoprotein complex containing mRNAs and RNA-binding proteins including DDX5, HNRNPH2 and SRSF1 as well as splicing regulator ARVCF. Interacts with TXNL4/DIM1.

Its subcellular location is the nucleus. It localises to the nucleoplasm. This protein is a component of the heterogeneous nuclear ribonucleoprotein (hnRNP) complexes which provide the substrate for the processing events that pre-mRNAs undergo before becoming functional, translatable mRNAs in the cytoplasm. Binds poly(RG). The sequence is that of Heterogeneous nuclear ribonucleoprotein H2 (HNRNPH2) from Bos taurus (Bovine).